The primary structure comprises 78 residues: cAMP-dependent protein kinase inhibitor beta (78 aa).

Basic and acidic residues predominate over residues 1–10 (MRTDSSKMTD). The interval 1–78 (MRTDSSKMTD…QLEKPQNEEK (78 aa)) is disordered. A compositionally biased stretch (polar residues) spans 33–42 (IQSSAATDGT). Residues 53 to 78 (SVKEDAKEKDEKTTQDQLEKPQNEEK) show a composition bias toward basic and acidic residues.

This sequence belongs to the PKI family.

Functionally, extremely potent competitive inhibitor of cAMP-dependent protein kinase activity, this protein interacts with the catalytic subunit of the enzyme after the cAMP-induced dissociation of its regulatory chains. The sequence is that of cAMP-dependent protein kinase inhibitor beta (PKIB) from Homo sapiens (Human).